Consider the following 329-residue polypeptide: MKPLNIIFAGTPDFAARHLQALIDSEHNIIGVYSQPDRPAGRGKKLQASPVKSLAIEHNLPVFQPKSLRDEQAQAELANLNADIMVVVAYGLILPKVVLDTPKLGCINVHGSILPRWRGAAPIQRALWAGDTETGVTIMQMDIGLDTGDMLLKTRLPIEDNDTSASLYEKLALQGPDALIEALTGLAKGELTAEKQDESLANYAEKLSKEEAELDWSKSALELWREIRAFNPWPISHFTHQDASIKVRESAVSNLSSDAPAGTIISAGKQGIDIATGDGVLTLLNMQLPGKKPLSVGDILNSRGEWFTPGTLLNSKKLIGKEPAVKEAE.

(6S)-5,6,7,8-tetrahydrofolate is bound at residue 112 to 115 (SILP).

This sequence belongs to the Fmt family.

It catalyses the reaction L-methionyl-tRNA(fMet) + (6R)-10-formyltetrahydrofolate = N-formyl-L-methionyl-tRNA(fMet) + (6S)-5,6,7,8-tetrahydrofolate + H(+). Functionally, attaches a formyl group to the free amino group of methionyl-tRNA(fMet). The formyl group appears to play a dual role in the initiator identity of N-formylmethionyl-tRNA by promoting its recognition by IF2 and preventing the misappropriation of this tRNA by the elongation apparatus. The sequence is that of Methionyl-tRNA formyltransferase from Shewanella sediminis (strain HAW-EB3).